We begin with the raw amino-acid sequence, 80 residues long: Serine palmitoyltransferase-regulating protein TSC3 (80 aa).

The helical transmembrane segment at 54 to 74 threads the bilayer; sequence FDSFFLHVFFLTIFSLSFFGI.

Interacts with the serine palmitoyltransferase complex LCB1-LCB2. Component of the SPOTS complex, at least composed of LCB1/2 (LCB1 and/or LCB2), ORM1/2 (ORM1 and/or ORM2), SAC1 and TSC3.

The protein localises to the endoplasmic reticulum membrane. In terms of biological role, stimulates the activity of serine palmitoyltransferase (SPT), and thus plays a role in the biosynthesis of sphingolipids. The polypeptide is Serine palmitoyltransferase-regulating protein TSC3 (TSC3) (Saccharomyces cerevisiae (strain ATCC 204508 / S288c) (Baker's yeast)).